A 606-amino-acid polypeptide reads, in one-letter code: Retrovirus-related Pol polyprotein from type-1 retrotransposable element R2 (606 aa).

The region spanning 1–208 (GTLANIIMLE…NTFKYLGLTF (208 aa)) is the Reverse transcriptase domain. The interval 331 to 606 (IFNIEGPARS…PPDPPRPVPP (276 aa)) is nucleic acid-binding endonuclease.

It catalyses the reaction DNA(n) + a 2'-deoxyribonucleoside 5'-triphosphate = DNA(n+1) + diphosphate. This is Retrovirus-related Pol polyprotein from type-1 retrotransposable element R2 from Popillia japonica (Japanese beetle).